The chain runs to 427 residues: MTAASRANPYSIVSSEEDGLHLVTMSGANGFGNGKVHTRRRCRNRFVKKNGQCNIEFANMDEKSQRYLADMFTTCVDIRWRYMLLIFSLAFLASWLLFGIIFWVIAVAHGDLEPAEGRGRTPCVLQVHGFMAAFLFSIETQTTIGYGLRCVTEECPVAVFMVVAQSIVGCIIDSFMIGAIMAKMGRPKKRAQTLLFSHNAVVALRDGKLCLMWRVGNLRKSHIVEAHVRAQLIKPRVTEEGEYIPLDQIDIDVGFDKGLDRIFLVSPITILHEIDEASPLFGISRQDLETDDFEIVVILEGMVEATAMTTQARSSYLANEILWGHRFEPVLFEEKNQYKIDYSHFHKTYEVPSTPRCSAKDLVENKFLLPSANSFCYENELAFLSRDEEDEVATDRDGRSPQPEHDFDRLQASSGALERPYRRESEI.

Topologically, residues 1 to 77 are cytoplasmic; the sequence is MTAASRANPY…LADMFTTCVD (77 aa). At Cys-75 the chain carries S-nitrosocysteine. Residues 78-104 traverse the membrane as a helical segment; the sequence is IRWRYMLLIFSLAFLASWLLFGIIFWV. A 1,2-diacyl-sn-glycero-3-phospho-(1D-myo-inositol-4,5-bisphosphate) is bound by residues Arg-79 and Arg-81. Residues 105-129 are Extracellular-facing; it reads IAVAHGDLEPAEGRGRTPCVLQVHG. Cys-123 and Cys-155 form a disulfide bridge. The segment at residues 130–146 is an intramembrane region (helical; Pore-forming); that stretch reads FMAAFLFSIETQTTIGY. Residues Thr-143, Ile-144, Gly-145, and Tyr-146 each contribute to the K(+) site. Positions 143 to 148 match the Selectivity filter motif; the sequence is TIGYGL. The Extracellular segment spans residues 147–155; sequence GLRCVTEEC. A helical transmembrane segment spans residues 156-183; the sequence is PVAVFMVVAQSIVGCIIDSFMIGAIMAK. The a 1,2-diacyl-sn-glycero-3-phospho-(1D-myo-inositol-4,5-bisphosphate) site is built by Lys-183 and Lys-188. Residues 184 to 427 are Cytoplasmic-facing; the sequence is MGRPKKRAQT…ERPYRRESEI (244 aa). Residues 387-427 are disordered; it reads DEEDEVATDRDGRSPQPEHDFDRLQASSGALERPYRRESEI. Over residues 393–409 the composition is skewed to basic and acidic residues; it reads ATDRDGRSPQPEHDFDR. The short motif at 425–427 is the PDZ-binding element; that stretch reads SEI.

It belongs to the inward rectifier-type potassium channel (TC 1.A.2.1) family. KCNJ12 subfamily. As to quaternary structure, homotetramer. Forms heteromer with KCNJ4. Can form heteromeric channels with Kir2.6/KCNJ18. Association, via its PDZ-recognition domain, with LIN7A, LIN7B, LIN7C, DLG1, CASK and APBA1 plays a key role in its localization and trafficking. Highest level in cerebellum. Moderately found in kidney, forebrain and skeletal muscle. Not detected in uterus, liver and pancreas.

It localises to the membrane. Its subcellular location is the cell membrane. The protein localises to the sarcolemma. The protein resides in the T-tubule. The enzyme catalyses K(+)(in) = K(+)(out). With respect to regulation, activated by phosphatidylinositol 4,5-biphosphate (PtdIns(4,5)P2). PtdIns(4,5)P2 binding to the cytoplasmic side of the channel triggers a conformation change leading to channel opening. Inhibited by Ba(2+). Functionally, inward rectifying potassium channel that probably participates in controlling the resting membrane potential in electrically excitable cells. It probably participates in establishing action potential waveform and excitability of neuronal and muscle tissues. Inward rectifier potassium channels are characterized by a greater tendency to allow potassium to flow into the cell rather than out of it. Their voltage dependence is regulated by the concentration of extracellular potassium; as external potassium is raised, the voltage range of the channel opening shifts to more positive voltages. The inward rectification is mainly due to the blockage of outward current by internal magnesium. The polypeptide is ATP-sensitive inward rectifier potassium channel 12 (Kcnj12) (Rattus norvegicus (Rat)).